Consider the following 268-residue polypeptide: Ribosomal RNA large subunit methyltransferase E (268 aa).

The S-adenosyl-L-methionine site is built by Gly-50, Trp-52, Asp-68, Asp-84, and Asp-109. Lys-149 acts as the Proton acceptor in catalysis. The 59-residue stretch at 196-254 (PLRKGDKFVVDIEKLGSSGDGAVLIEGFVVFVKEVEVGEKVRIKISDVKPNFAFADVEE) folds into the TRAM domain.

Belongs to the class I-like SAM-binding methyltransferase superfamily. RNA methyltransferase RlmE family.

It is found in the cytoplasm. The enzyme catalyses uridine(2552) in 23S rRNA + S-adenosyl-L-methionine = 2'-O-methyluridine(2552) in 23S rRNA + S-adenosyl-L-homocysteine + H(+). Functionally, specifically methylates the uridine in position 2552 of 23S rRNA at the 2'-O position of the ribose in the fully assembled 50S ribosomal subunit. The sequence is that of Ribosomal RNA large subunit methyltransferase E from Methanosarcina mazei (strain ATCC BAA-159 / DSM 3647 / Goe1 / Go1 / JCM 11833 / OCM 88) (Methanosarcina frisia).